The sequence spans 248 residues: PF03932 family protein CutC (248 aa).

The protein belongs to the CutC family. Homodimer.

The protein resides in the cytoplasm. The chain is PF03932 family protein CutC from Shigella boydii serotype 18 (strain CDC 3083-94 / BS512).